The following is a 284-amino-acid chain: 4-diphosphocytidyl-2-C-methyl-D-erythritol kinase (284 aa).

Lys14 is an active-site residue. 98-108 lines the ATP pocket; the sequence is PMGGGLGGGSS. The active site involves Asp140.

Belongs to the GHMP kinase family. IspE subfamily.

It carries out the reaction 4-CDP-2-C-methyl-D-erythritol + ATP = 4-CDP-2-C-methyl-D-erythritol 2-phosphate + ADP + H(+). Its pathway is isoprenoid biosynthesis; isopentenyl diphosphate biosynthesis via DXP pathway; isopentenyl diphosphate from 1-deoxy-D-xylulose 5-phosphate: step 3/6. Functionally, catalyzes the phosphorylation of the position 2 hydroxy group of 4-diphosphocytidyl-2C-methyl-D-erythritol. This is 4-diphosphocytidyl-2-C-methyl-D-erythritol kinase from Shewanella putrefaciens (strain CN-32 / ATCC BAA-453).